Reading from the N-terminus, the 215-residue chain is Large ribosomal subunit protein uL3 (215 aa).

A disordered region spans residues 134–166 (MAHGSKNHRAPGSIGAGTTPGRVFPGKRMPGRM).

Belongs to the universal ribosomal protein uL3 family. Part of the 50S ribosomal subunit. Forms a cluster with proteins L14 and L19.

One of the primary rRNA binding proteins, it binds directly near the 3'-end of the 23S rRNA, where it nucleates assembly of the 50S subunit. The chain is Large ribosomal subunit protein uL3 from Gloeobacter violaceus (strain ATCC 29082 / PCC 7421).